The primary structure comprises 183 residues: ATP-dependent protease subunit HslV (183 aa).

The active site involves Thr7. Na(+) is bound by residues Gly162, Cys165, and Thr168.

The protein belongs to the peptidase T1B family. HslV subfamily. A double ring-shaped homohexamer of HslV is capped on each side by a ring-shaped HslU homohexamer. The assembly of the HslU/HslV complex is dependent on binding of ATP.

It is found in the cytoplasm. It catalyses the reaction ATP-dependent cleavage of peptide bonds with broad specificity.. With respect to regulation, allosterically activated by HslU binding. Functionally, protease subunit of a proteasome-like degradation complex believed to be a general protein degrading machinery. The chain is ATP-dependent protease subunit HslV from Alkalilimnicola ehrlichii (strain ATCC BAA-1101 / DSM 17681 / MLHE-1).